Consider the following 292-residue polypeptide: Transcription factor HFR1 (292 aa).

The interval 114-153 (KRRIQVLSSDDESEEFTREVPSVTRKGSKRRRRDEKMSNK) is disordered. Residues 134–147 (PSVTRKGSKRRRRD) are basic motif; degenerate. Positions 134 to 183 (PSVTRKGSKRRRRDEKMSNKMRKLQQLVPNCHKTDKVSVLDKTIEYMKNL) constitute a bHLH domain. The span at 139–153 (KGSKRRRRDEKMSNK) shows a compositional bias: basic residues. Residues 141-148 (SKRRRRDE) carry the Nuclear localization signal motif. Positions 148 to 183 (EKMSNKMRKLQQLVPNCHKTDKVSVLDKTIEYMKNL) are helix-loop-helix motif.

In terms of assembly, binds to FHY1 and FHL. Forms PHYA/FHY1/HFR1 complex. Homodimer and heterodimer with PIF3. Do not interact alone with either phytochrome A (phyA) or B (phyB), but REP1/PIF3 complex binds to phyA and phyB, preferentially to the Pfr forms. Forms non-functional heterodimer with PRE6, causing liberation of PIF4 from the transcriptionally inactive complex HFR1-PIF4. Repressed when bound to PRE1, PRE2 and PRE4. Mainly expressed in fruits and flowers and, to a lower extent, in leaves, stems, seedlings and roots.

It localises to the nucleus. Atypical bHLH transcription factor that regulates photomorphogenesis through modulation of phytochrome (e.g. PHYA) and cryptochrome signalings. Suppresses the transcriptional regulation activity of PIF4 by forming non-DNA-binding heterodimer. In Arabidopsis thaliana (Mouse-ear cress), this protein is Transcription factor HFR1.